A 108-amino-acid polypeptide reads, in one-letter code: MTIMSSLAGAGRGVVNTIGGAAQGINSVKSSADRNAALVSNTGSTDSIDATRSSISKGDAKSAELDGTANEENGLLRESSMLAGFEDKKEALSNQIVASKIRNSVVQF.

The span at 41 to 56 shows a compositional bias: polar residues; the sequence is NTGSTDSIDATRSSIS. A disordered region spans residues 41-73; that stretch reads NTGSTDSIDATRSSISKGDAKSAELDGTANEEN.

This sequence belongs to the HrpA type 1 family.

It localises to the secreted. It is found in the fimbrium. Major structural protein of the hrp pilus, which is a component of the type III secretion system (T3SS, Hrp secretion system) required for effector protein delivery, parasitism, and pathogenicity. The hrp pilus functions as a conduit for protein delivery into the host cell. Also, affects the expression of T3SS-associated genes. Required for full expression of genes that encode regulatory, secretion, and effector proteins of the T3SS. HrpA-mediated gene regulation apparently is through effect on the mRNA level of HrpR and HrpS. This Pseudomonas syringae pv. syringae protein is Hrp pili protein HrpA (hrpA).